The chain runs to 202 residues: V-type ATP synthase subunit D (202 aa).

The protein belongs to the V-ATPase D subunit family.

In terms of biological role, produces ATP from ADP in the presence of a proton gradient across the membrane. This Borreliella burgdorferi (strain ATCC 35210 / DSM 4680 / CIP 102532 / B31) (Borrelia burgdorferi) protein is V-type ATP synthase subunit D (atpD).